Consider the following 913-residue polypeptide: MQEDTIIQKNLFAIGNDINEQKKITKIPENLSLEDLKKESQKRPRQRKNSTNLINKFKTDLISNNKNVCINEESYSYKTVSKLKLTPVMKHYVTLKEENKDRLLLYRLGDFFECFFEDAVLISNLLEITLTSKDAGKEIGKIPMAGVPHHAMERYCADLIKKNYSVVICDQLEKSSGNYGTPIKRGITRIITPGTVIEEGMLIAKKNNWISAIYLSEENSDESYEWGISKADVSTGELITLEGQSLSKLFDEIIKLDSSEIIVGSNTARDLLIKGNSQITYTVSQETNFGINEANYLIKNYFQIANLEGIGLKNLNNATRSLGGLLNYLEKINPSNLDKDSSLKISLDFPQIQYGHNKLIIDYQTQKNLEIKNTQRENNYVGSLLWSIDRTYTCMGARCLRRWIDSPLLNVNEIYKRQNIITNFLESKKLRIDTQNLLRAMGDLERLAGRACAGHASPRDLIAIAEGLKKLPRLKSIIELFKYDLPDWTDQLKNIDEGLLELADTISFKLVENPPLNISEGGMIHDGVDNILDGLRNLMDDYSEWLNKEESKERKISKISNLKIQFHKNFGYYISINKSKVNLAPQHWIKRQTLTNEERYITSEIKNKENKIFQIKSRASSKEYEIFCELRNIVAEKTKQIRSIAKSIASLDALLGLSITSVENNFIKPSLIPINDSMTKNSTKIIAGRNPIVEQLLSDKKFVANDISFEDNQKLIILTGPNASGKSCFIRQLGLIQILTQIGSFVPANNAEIKIADRIFTRIGAVDDQSSGQSTFMVEMSETASILNQATSSSLVLLDEIGRGTSTFDGLSIAWSVSEYLAKKIQCNTIFATHYHELNYLKNTNKNIQNFQVLVEQNNDQLIFSHRIVKGGSNKSYGIEAAKLAGVPKEVIEKAKSVLNSLEENNKLNYDIK.

720 to 727 (GPNASGKS) serves as a coordination point for ATP.

This sequence belongs to the DNA mismatch repair MutS family.

In terms of biological role, this protein is involved in the repair of mismatches in DNA. It is possible that it carries out the mismatch recognition step. This protein has a weak ATPase activity. The sequence is that of DNA mismatch repair protein MutS from Prochlorococcus marinus (strain AS9601).